Here is a 197-residue protein sequence, read N- to C-terminus: Inner membrane protein p54 (197 aa).

Residues 32 to 52 (YTILIAIVVLVIIIIVLIYLF) form a helical membrane-spanning segment. A disordered region spans residues 84–123 (PQPGTSKPAGATTASVGKPVTGRPATNRPVTDRPATNNPV). Tandem repeats lie at residues 139–142 (AAAS), 143–146 (AAAS), 147–150 (AAAS), and 151–154 (AAAS). The tract at residues 139–154 (AAASAAASAAASAAAS) is 4 X 4 AA tandem repeats of A-A-A-S. The tract at residues 163-175 (YTTVTTQNTASQT) is interaction with host DYNLL1.

This sequence belongs to the asfivirus envelope protein p54 family. As to quaternary structure, interacts with the host light chain cytoplasmic dynein DYNLL1; this interaction is critical for intracellular microtubule-dependent virus transport toward viral factories.

The protein resides in the virion membrane. The protein localises to the host cytoplasm. It is found in the host cytoskeleton. It localises to the host endoplasmic reticulum membrane. In terms of biological role, inner envelope protein involved, through its interaction with host dynein, in the intracellular microtubule-dependent transport of viral capsid toward viral factories. Seems to induce caspase-3 activation and apoptosis. Plays a role in virion morphogenesis by recruiting and transforming the host ER membranes into the precursors of the viral envelope. Involved in virus attachment to the host cell. This is Inner membrane protein p54 from African swine fever virus (isolate Tick/South Africa/Pretoriuskop Pr4/1996) (ASFV).